We begin with the raw amino-acid sequence, 106 residues long: Malonate decarboxylase acyl carrier protein (106 aa).

Position 28 is an O-(phosphoribosyl dephospho-coenzyme A)serine (serine 28).

Belongs to the MdcC family. Post-translationally, covalently binds the prosthetic group of malonate decarboxylase.

It is found in the cytoplasm. Subunit of malonate decarboxylase, it is an acyl carrier protein to which acetyl and malonyl thioester residues are bound via a 2'-(5''-phosphoribosyl)-3'-dephospho-CoA prosthetic group and turn over during the catalytic mechanism. This chain is Malonate decarboxylase acyl carrier protein, found in Stenotrophomonas maltophilia (strain K279a).